The primary structure comprises 117 residues: MPTIQQLIRNARQPIENRKKSPALRGCPQRRGTITPKKPNSALRKVARVRLTSGFEITAYIPGIDHNLQEHSVVLVRGGRVKDLPGVRYHIVRGTLDAAEVKDRQQGRSKYGVKKPK.

The interval 9–40 (RNARQPIENRKKSPALRGCPQRRGTITPKKPN) is disordered.

This sequence belongs to the universal ribosomal protein uS12 family. As to quaternary structure, part of the 30S ribosomal subunit.

Its subcellular location is the plastid. The protein localises to the chloroplast. With S4 and S5 plays an important role in translational accuracy. Located at the interface of the 30S and 50S subunits. This Pinus koraiensis (Korean pine) protein is Small ribosomal subunit protein uS12c (rps12).